The sequence spans 69 residues: Large ribosomal subunit protein bL31 (69 aa).

Zn(2+)-binding residues include cysteine 16, cysteine 18, cysteine 36, and cysteine 39.

This sequence belongs to the bacterial ribosomal protein bL31 family. Type A subfamily. Part of the 50S ribosomal subunit. Zn(2+) serves as cofactor.

Binds the 23S rRNA. The chain is Large ribosomal subunit protein bL31 from Ruminiclostridium cellulolyticum (strain ATCC 35319 / DSM 5812 / JCM 6584 / H10) (Clostridium cellulolyticum).